We begin with the raw amino-acid sequence, 141 residues long: Nucleoside diphosphate kinase (141 aa).

ATP-binding residues include Lys11, Phe59, Arg87, Thr93, Arg104, and Asn114. The Pros-phosphohistidine intermediate role is filled by His117.

It belongs to the NDK family. In terms of assembly, homotetramer. The cofactor is Mg(2+).

The protein resides in the cytoplasm. The catalysed reaction is a 2'-deoxyribonucleoside 5'-diphosphate + ATP = a 2'-deoxyribonucleoside 5'-triphosphate + ADP. It carries out the reaction a ribonucleoside 5'-diphosphate + ATP = a ribonucleoside 5'-triphosphate + ADP. Functionally, major role in the synthesis of nucleoside triphosphates other than ATP. The ATP gamma phosphate is transferred to the NDP beta phosphate via a ping-pong mechanism, using a phosphorylated active-site intermediate. This is Nucleoside diphosphate kinase from Polynucleobacter necessarius subsp. necessarius (strain STIR1).